Reading from the N-terminus, the 430-residue chain is MSKIVDIKAREILDSRGNPTIEADVILESGASGSACAPSGASTGSREALELRDGDKSRYLGKGVTKAVGNVNSAIRELLVGMEVSDQKALDQAMLDADGTENKGNLGANAILAVSLAAAKAAAVDQGKPLYEYISDLQDDDNEYSLPVPMMNIINGGEHADNNVDIQEFMIQPVGAPTVAEAIRYGAEIFHALKGVLKKRGLNTAVGDEGGFAPNLPSNEAALEAIMEAIEIAGYKAGDDVTLALDCAASEFYKDGKYVLAGEDRSMNSEEFADYLAELCDRYPIISIEDGMDESDWDGWKILTEKLGKKVQLVGDDLFVTNTRILQRGIDEKVANSILIKFNQIGSLTETLDAIKMAKDAGYTAVISHRSGETADTTIADLAVATAAGQIKTGSLCRSDRVAKYNRLIRIEQELGRAAYHGRKEFKLLG.

Gln167 is a (2R)-2-phosphoglycerate binding site. The Proton donor role is filled by Glu209. Residues Asp246, Glu289, and Asp316 each coordinate Mg(2+). The (2R)-2-phosphoglycerate site is built by Lys341, Arg370, Ser371, and Lys392. The Proton acceptor role is filled by Lys341.

It belongs to the enolase family. Component of the RNA degradosome, a multiprotein complex involved in RNA processing and mRNA degradation. Mg(2+) serves as cofactor.

The protein resides in the cytoplasm. It localises to the secreted. It is found in the cell surface. The enzyme catalyses (2R)-2-phosphoglycerate = phosphoenolpyruvate + H2O. The protein operates within carbohydrate degradation; glycolysis; pyruvate from D-glyceraldehyde 3-phosphate: step 4/5. In terms of biological role, catalyzes the reversible conversion of 2-phosphoglycerate (2-PG) into phosphoenolpyruvate (PEP). It is essential for the degradation of carbohydrates via glycolysis. This Alcanivorax borkumensis (strain ATCC 700651 / DSM 11573 / NCIMB 13689 / SK2) protein is Enolase.